Reading from the N-terminus, the 344-residue chain is Angiopoietin-related protein 7 (344 aa).

A signal peptide spans 1–26 (MLKKTLSAVAWLCIFLVAFVSHPVWP). Positions 37-116 (ELTAATCCEE…IGIMQLQAAQ (80 aa)) form a coiled coil. The N-linked (GlcNAc...) asparagine glycan is linked to N56. The region spanning 120-341 (QTSADAIYDC…RVEMKIRPED (222 aa)) is the Fibrinogen C-terminal domain. An intrachain disulfide couples C129 to C160. 2 N-linked (GlcNAc...) asparagine glycosylation sites follow: N251 and N265. C283 and C296 are joined by a disulfide.

In terms of assembly, homotetramer; disulfide-linked.

The protein localises to the secreted. Its function is as follows. Has a role in the formation and organization of the extracellular matrix. In the eye, it functions as a mediator of dexamethasone-induced matrix deposition in the trabecular meshwork, the tissue responsible for the outflow of the ocular aqueous humor and for the maintenance of intraocular pressure. Is a negative regulator of angiogenesis in the cornea, and plays a major role in maintaining corneal avascularity and transparency. The chain is Angiopoietin-related protein 7 (ANGPTL7) from Bos taurus (Bovine).